We begin with the raw amino-acid sequence, 188 residues long: Large ribosomal subunit protein uL6 (188 aa).

It belongs to the universal ribosomal protein uL6 family. Part of the 50S ribosomal subunit.

In terms of biological role, this protein binds to the 23S rRNA, and is important in its secondary structure. It is located near the subunit interface in the base of the L7/L12 stalk, and near the tRNA binding site of the peptidyltransferase center. The chain is Large ribosomal subunit protein uL6 from Myxococcus xanthus (strain DK1622).